A 1785-amino-acid chain; its full sequence is Plexin-2 (1785 aa).

The first 17 residues, 1–17 (MLPESVFLLLISHFLRA), serve as a signal peptide directing secretion. One can recognise a Sema domain in the interval 18-444 (VTQPPFETEG…MPYGIILEEL (427 aa)). Residues 18–1139 (VTQPPFETEG…SDHALPSRLS (1122 aa)) are Extracellular-facing. N-linked (GlcNAc...) asparagine glycosylation is present at N66. Intrachain disulfides connect C84–C91, C118–C126, C247–C349, C263–C300, C318–C336, C447–C464, C453–C487, C456–C473, and C467–C479. An N-linked (GlcNAc...) asparagine glycan is attached at N249. Residues 446 to 488 (TCSHHSSCTECLVSVDPLCQWCHPTQSCTTSARCTSPVTSQCP) form the PSI 1 domain. N502, N536, and N572 each carry an N-linked (GlcNAc...) asparagine glycan. A disulfide bond links C524 and C544. A PSI 2 domain is found at 577-617 (DCSGYGTCSSCMSSEYNCAWCSGLHKCSNSCGALEKSKACV). Residues N679 and N702 are each glycosylated (N-linked (GlcNAc...) asparagine). The PSI 3 domain maps to 707–748 (SCTNLASDCSSCLALSPSLSCGWCNRQCSHECHESKATAVCD). IPT/TIG domains are found at residues 750-837 (PRID…LYSF), 840-924 (TSIF…PFEY), and 928-1040 (PSIS…LSPF). Residues N864, N886, N984, and N1016 are each glycosylated (N-linked (GlcNAc...) asparagine). The helical transmembrane segment at 1140–1160 (LLILGLLLFIVVTLTVMCLVF) threads the bilayer. Residues 1159-1197 (VFKRRRQEREKEYRKIQLQMENLENNVRKECKQAFAELQ) are a coiled coil. Residues 1161 to 1785 (KRRRQEREKE…HIYSTISDYE (625 aa)) lie on the Cytoplasmic side of the membrane.

Belongs to the plexin family. In terms of assembly, interacts with mab-20. In terms of tissue distribution, expressed predominantly in the central nervous system from embryonic to adult stages. Expressed in early embryos in ventral neuroblasts. Expressed in neurons and in a subset of posterior lateral and ventral epidermal cells following epidermal enclosure. Present in neurons, muscles and weakly expressed in epidermal cells of the larval tail.

It is found in the cell membrane. Involved as a receptor for mab-20/sema-2a in the formation or stabilization of cell-cell contacts at several stages of epithelial morphogenesis. In early embryonic development, required for proper ventral closure of the epidermis. During male tail morphogenesis, involved in precursor cell sorting and in the formation of distinct sensory rays. Involved in axon guidance of SDQL neurons during neurogenesis. Probably in response to stimulation by mab-20, regulates fln-1-mediated remodeling of the actin cytoskeleton and thus axon guidance and/or fasciculation of DD/VD neurons. The sequence is that of Plexin-2 from Caenorhabditis elegans.